The sequence spans 153 residues: Small ribosomal subunit protein uS13 (153 aa).

Residues 129-153 (RGQRTKSTFRHGSSVGVSRTRPTGN) are disordered. The span at 143–153 (VGVSRTRPTGN) shows a compositional bias: polar residues.

It belongs to the universal ribosomal protein uS13 family. Part of the 30S ribosomal subunit. Forms a loose heterodimer with protein S19. Forms two bridges to the 50S subunit in the 70S ribosome.

In terms of biological role, located at the top of the head of the 30S subunit, it contacts several helices of the 16S rRNA. In the 70S ribosome it contacts the 23S rRNA (bridge B1a) and protein L5 of the 50S subunit (bridge B1b), connecting the 2 subunits; these bridges are implicated in subunit movement. This Methanosphaera stadtmanae (strain ATCC 43021 / DSM 3091 / JCM 11832 / MCB-3) protein is Small ribosomal subunit protein uS13.